The sequence spans 772 residues: Lon protease (772 aa).

Residues 6-200 (YPTLPLKNTV…LMHRYLNHEV (195 aa)) form the Lon N-terminal domain. ATP is bound at residue 352 to 359 (GPPGVGKT). Residues 588-769 (QLAPGVAAGL…EEVLAEAIPD (182 aa)) enclose the Lon proteolytic domain. Residues Ser675 and Lys718 contribute to the active site.

Belongs to the peptidase S16 family. As to quaternary structure, homohexamer. Organized in a ring with a central cavity.

The protein resides in the cytoplasm. It carries out the reaction Hydrolysis of proteins in presence of ATP.. ATP-dependent serine protease that mediates the selective degradation of mutant and abnormal proteins as well as certain short-lived regulatory proteins. Required for cellular homeostasis and for survival from DNA damage and developmental changes induced by stress. Degrades polypeptides processively to yield small peptide fragments that are 5 to 10 amino acids long. Binds to DNA in a double-stranded, site-specific manner. The protein is Lon protease of Nitrosococcus oceani (strain ATCC 19707 / BCRC 17464 / JCM 30415 / NCIMB 11848 / C-107).